A 384-amino-acid chain; its full sequence is Flap endonuclease 1 (384 aa).

The tract at residues 1–105 (MGIKKLTDLI…GELAKRQARR (105 aa)) is N-domain. D34 is a binding site for Mg(2+). Residue R71 participates in DNA binding. Mg(2+)-binding residues include D87, E159, E161, D180, and D182. Positions 123-254 (EVQKFAKRVI…KRAIELIQKH (132 aa)) are I-domain. E159 is a binding site for DNA. Residues G232 and D234 each coordinate DNA. Position 234 (D234) interacts with Mg(2+). The interval 338–346 (VQSRMDSFI) is interaction with PCNA. Residues 349–384 (IKKPEDPNDKKKKVTKTPSKPSAKTSKKSSSTFKRK) are disordered. The span at 364-384 (KTPSKPSAKTSKKSSSTFKRK) shows a compositional bias: low complexity.

Belongs to the XPG/RAD2 endonuclease family. FEN1 subfamily. Interacts with PCNA. Three molecules of repg bind to one PCNA trimer with each molecule binding to one PCNA monomer. PCNA stimulates the nuclease activity without altering cleavage specificity. The cofactor is Mg(2+). In terms of processing, phosphorylated. Phosphorylation upon DNA damage induces relocalization to the nuclear plasma.

The protein resides in the nucleus. It is found in the nucleolus. Its subcellular location is the nucleoplasm. The protein localises to the mitochondrion. Structure-specific nuclease with 5'-flap endonuclease and 5'-3' exonuclease activities involved in DNA replication and repair. During DNA replication, cleaves the 5'-overhanging flap structure that is generated by displacement synthesis when DNA polymerase encounters the 5'-end of a downstream Okazaki fragment. It enters the flap from the 5'-end and then tracks to cleave the flap base, leaving a nick for ligation. Also involved in the long patch base excision repair (LP-BER) pathway, by cleaving within the apurinic/apyrimidinic (AP) site-terminated flap. Acts as a genome stabilization factor that prevents flaps from equilibrating into structures that lead to duplications and deletions. Also possesses 5'-3' exonuclease activity on nicked or gapped double-stranded DNA, and exhibits RNase H activity. Also involved in replication and repair of rDNA and in repairing mitochondrial DNA. This Dictyostelium discoideum (Social amoeba) protein is Flap endonuclease 1.